A 217-amino-acid polypeptide reads, in one-letter code: Small ribosomal subunit protein uS3 (217 aa).

Residues 40–110 (IRELVNKSFT…EVYINIHEVR (71 aa)) form the KH type-2 domain.

Belongs to the universal ribosomal protein uS3 family. In terms of assembly, part of the 30S ribosomal subunit. Forms a tight complex with proteins S10 and S14.

Its function is as follows. Binds the lower part of the 30S subunit head. Binds mRNA in the 70S ribosome, positioning it for translation. The sequence is that of Small ribosomal subunit protein uS3 from Rickettsia bellii (strain OSU 85-389).